Consider the following 289-residue polypeptide: BTB/POZ domain-containing protein KCTD7 (289 aa).

A disordered region spans residues methionine 1–histidine 40. The BTB domain occupies valine 53–leucine 141.

In terms of assembly, interacts with CUL3.

It is found in the cell membrane. The protein localises to the cytoplasm. It localises to the cytosol. Its function is as follows. May be involved in the control of excitability of cortical neurons. The polypeptide is BTB/POZ domain-containing protein KCTD7 (KCTD7) (Bos taurus (Bovine)).